Reading from the N-terminus, the 388-residue chain is Ribonuclease D (388 aa).

The region spanning 7–173 (ITDSKTLAQF…QIFPKMLEEL (167 aa)) is the 3'-5' exonuclease domain. Residues 212-293 (KADVLGRLKA…ASHAPLAKEE (82 aa)) form the HRDC domain.

It belongs to the RNase D family. The cofactor is a divalent metal cation.

The protein localises to the cytoplasm. It catalyses the reaction Exonucleolytic cleavage that removes extra residues from the 3'-terminus of tRNA to produce 5'-mononucleotides.. Its function is as follows. Exonuclease involved in the 3' processing of various precursor tRNAs. Initiates hydrolysis at the 3'-terminus of an RNA molecule and releases 5'-mononucleotides. This is Ribonuclease D from Sphingobium indicum (strain DSM 16413 / CCM 7287 / MTCC 6362 / UT26 / NBRC 101211 / UT26S) (Sphingobium japonicum).